The chain runs to 216 residues: MTISNQSQVLLSANELTCIREERILFDGLSFNINAGDIVQIEGPNGAGKTSLLRIIAGLSRPYAGEVEYSGENINRCRDEFNHDLLYLGHLAGVKSELTAEENLNFNLRISGYDDFDTTAILAKVNLTGFEEALAGHLSAGQHRRTALARLQHSNCKIWILDEPFTAIDKKGVEELEQLFIQHAESGGCVILTTHQDMSIISDAMLRKITLDYRFV.

One can recognise an ABC transporter domain in the interval 11-216; the sequence is LSANELTCIR…RKITLDYRFV (206 aa). ATP is bound at residue 43–50; that stretch reads GPNGAGKT.

Belongs to the ABC transporter superfamily. CcmA exporter (TC 3.A.1.107) family. The complex is composed of two ATP-binding proteins (CcmA) and two transmembrane proteins (CcmB).

The protein resides in the cell inner membrane. It catalyses the reaction heme b(in) + ATP + H2O = heme b(out) + ADP + phosphate + H(+). Its function is as follows. Part of the ABC transporter complex CcmAB involved in the biogenesis of c-type cytochromes; once thought to export heme, this seems not to be the case, but its exact role is uncertain. Responsible for energy coupling to the transport system. The chain is Cytochrome c biogenesis ATP-binding export protein CcmA from Shewanella frigidimarina (strain NCIMB 400).